Here is a 282-residue protein sequence, read N- to C-terminus: Bifunctional protein FolD (282 aa).

NADP(+) is bound by residues 165 to 167 (NRS), Ser190, and Ile231.

Belongs to the tetrahydrofolate dehydrogenase/cyclohydrolase family. Homodimer.

The catalysed reaction is (6R)-5,10-methylene-5,6,7,8-tetrahydrofolate + NADP(+) = (6R)-5,10-methenyltetrahydrofolate + NADPH. The enzyme catalyses (6R)-5,10-methenyltetrahydrofolate + H2O = (6R)-10-formyltetrahydrofolate + H(+). It participates in one-carbon metabolism; tetrahydrofolate interconversion. In terms of biological role, catalyzes the oxidation of 5,10-methylenetetrahydrofolate to 5,10-methenyltetrahydrofolate and then the hydrolysis of 5,10-methenyltetrahydrofolate to 10-formyltetrahydrofolate. This is Bifunctional protein FolD from Clostridium botulinum (strain Kyoto / Type A2).